We begin with the raw amino-acid sequence, 349 residues long: AA9 family lytic polysaccharide monooxygenase C (349 aa).

The signal sequence occupies residues 1–19 (MKSTFGLLALAAAAKLVSA). Cu(2+) contacts are provided by His20 and His102. Cysteines 62 and 183 form a disulfide. O2 is bound at residue His169. Tyr180 is a Cu(2+) binding site. The interval 233–304 (DGSSSGSSGS…SGSNSGSDSC (72 aa)) is disordered. 2 stretches are compositionally biased toward low complexity: residues 234–262 (GSSSGSSGSSGSSPATTTAPAVSVTAAPT) and 269–304 (TSATPTTFVTATKPATTAAPAAPSASSGSNSGSDSC). Positions 311–347 (GSVKIYGQCGGQNYSGPTSCEAGLICKEWNPYYHQCV) constitute a CBM1 domain. 2 cysteine pairs are disulfide-bonded: Cys319–Cys336 and Cys330–Cys346. Asn323 carries N-linked (GlcNAc...) asparagine glycosylation.

Belongs to the polysaccharide monooxygenase AA9 family. Cu(2+) is required as a cofactor.

The protein resides in the secreted. It catalyses the reaction [(1-&gt;4)-beta-D-glucosyl]n+m + reduced acceptor + O2 = 4-dehydro-beta-D-glucosyl-[(1-&gt;4)-beta-D-glucosyl]n-1 + [(1-&gt;4)-beta-D-glucosyl]m + acceptor + H2O.. Functionally, lytic polysaccharide monooxygenase (LPMO) that depolymerizes crystalline and amorphous polysaccharides via the oxidation of scissile alpha- or beta-(1-4)-glycosidic bonds, yielding C4 oxidation products. Catalysis by LPMOs requires the reduction of the active-site copper from Cu(II) to Cu(I) by a reducing agent and H(2)O(2) or O(2) as a cosubstrate. Active on cellulose and cello-oligosaccharides, as well as plant cell wall-derived hemicellulosic polysaccharides. Also active on cello-oligosaccharides such as cellohexaose, cellopentaose or cellotetraose. The polypeptide is AA9 family lytic polysaccharide monooxygenase C (Aspergillus fumigatus (strain ATCC MYA-4609 / CBS 101355 / FGSC A1100 / Af293) (Neosartorya fumigata)).